The primary structure comprises 356 residues: Peptide chain release factor 1 (356 aa).

At glutamine 233 the chain carries N5-methylglutamine.

Belongs to the prokaryotic/mitochondrial release factor family. Methylated by PrmC. Methylation increases the termination efficiency of RF1.

It localises to the cytoplasm. Its function is as follows. Peptide chain release factor 1 directs the termination of translation in response to the peptide chain termination codons UAG and UAA. The sequence is that of Peptide chain release factor 1 from Halalkalibacterium halodurans (strain ATCC BAA-125 / DSM 18197 / FERM 7344 / JCM 9153 / C-125) (Bacillus halodurans).